We begin with the raw amino-acid sequence, 44 residues long: Large ribosomal subunit protein bL34 (44 aa).

The protein belongs to the bacterial ribosomal protein bL34 family.

This Variovorax paradoxus (strain S110) protein is Large ribosomal subunit protein bL34.